We begin with the raw amino-acid sequence, 370 residues long: Quinolinate synthase (370 aa).

Residues histidine 62 and serine 83 each contribute to the iminosuccinate site. Cysteine 128 contacts [4Fe-4S] cluster. Iminosuccinate contacts are provided by residues 154-156 and serine 171; that span reads YAN. Cysteine 215 is a binding site for [4Fe-4S] cluster. Residues 241-243 and threonine 258 each bind iminosuccinate; that span reads HPE. Cysteine 312 contributes to the [4Fe-4S] cluster binding site.

It belongs to the quinolinate synthase family. Type 1 subfamily. It depends on [4Fe-4S] cluster as a cofactor.

Its subcellular location is the cytoplasm. The catalysed reaction is iminosuccinate + dihydroxyacetone phosphate = quinolinate + phosphate + 2 H2O + H(+). It functions in the pathway cofactor biosynthesis; NAD(+) biosynthesis; quinolinate from iminoaspartate: step 1/1. Functionally, catalyzes the condensation of iminoaspartate with dihydroxyacetone phosphate to form quinolinate. This is Quinolinate synthase from Neisseria meningitidis serogroup C / serotype 2a (strain ATCC 700532 / DSM 15464 / FAM18).